The following is a 485-amino-acid chain: Adenylate kinase 8 (485 aa).

2 adenylate kinase regions span residues 58–258 (PRVF…TFVL) and 269–471 (PRIL…SYIV). 67-72 (ASGKHT) contributes to the ATP binding site. Residues 87-113 (TPENVLSSDVSLLVKEAQSYRDKGQEV) are NMP 1. AMP contacts are provided by residues 140–143 (GFPK) and Gln-147. The tract at residues 177-206 (GKRIDITDGEVYHTTFDWPSDPAVQRNLVE) is LID 1. Position 218 (Arg-218) interacts with AMP. 278–283 (GSGRSL) provides a ligand contact to ATP. Residues 298-327 (CCGQVLKEAVADQTKLGELIQPYIENDQQV) form an NMP 2 region. AMP-binding positions include 325–327 (QQV), 354–357 (GFPQ), and Gln-361. The segment at 391 to 424 (LCMTDPVSGERYHSIYKPAPRSEVQERLQQNPKY) is LID 2. AMP is bound at residue Arg-432.

This sequence belongs to the adenylate kinase family.

The protein localises to the cytoplasm. Its subcellular location is the cytosol. The catalysed reaction is AMP + ATP = 2 ADP. It catalyses the reaction a 2'-deoxyribonucleoside 5'-diphosphate + ATP = a 2'-deoxyribonucleoside 5'-triphosphate + ADP. It carries out the reaction a ribonucleoside 5'-diphosphate + ATP = a ribonucleoside 5'-triphosphate + ADP. Functionally, nucleoside monophosphate (NMP) kinase that catalyzes the reversible transfer of the terminal phosphate group between nucleoside triphosphates and monophosphates. Has highest activity toward AMP, and weaker activity toward dAMP, CMP and dCMP. Also displays broad nucleoside diphosphate kinase activity. This is Adenylate kinase 8 (ak8) from Xenopus laevis (African clawed frog).